Reading from the N-terminus, the 542-residue chain is Valine N-monooxygenase 1 (542 aa).

Over 1-21 (MAMNVSTTIGLLNATSFASSS) the chain is Cytoplasmic. Residues 22 to 42 (SINTVKILFVTLFISIVSTIV) traverse the membrane as a helical; Signal-anchor for type II membrane protein segment. The Lumenal portion of the chain corresponds to 43 to 542 (KLQKSAANKE…LAPHLYPTSP (500 aa)). Residue N278 is glycosylated (N-linked (GlcNAc...) asparagine). Heme is bound at residue C478. N506 is a glycosylation site (N-linked (GlcNAc...) asparagine).

Belongs to the cytochrome P450 family. It depends on heme as a cofactor. In terms of tissue distribution, expressed in the epidermis, the next two cortex cell layers, the endodermis and the pericycle of leaf petioles. Strong expression around the laticifers among the phloem cells and in parenchymatic cells between the protoxylem and the metaxylem cells. In the leaves, preferentially expressed in the mesophyll cells adjacent to the epidermis.

The protein localises to the microsome membrane. It carries out the reaction L-valine + 2 reduced [NADPH--hemoprotein reductase] + 2 O2 = (E)-2-methylpropanal oxime + 2 oxidized [NADPH--hemoprotein reductase] + CO2 + 3 H2O + 2 H(+). The catalysed reaction is L-valine + reduced [NADPH--hemoprotein reductase] + O2 = N-hydroxy-L-valine + oxidized [NADPH--hemoprotein reductase] + H2O + 2 H(+). The enzyme catalyses N-hydroxy-L-valine + reduced [NADPH--hemoprotein reductase] + O2 = N,N-dihydroxy-L-valine + oxidized [NADPH--hemoprotein reductase] + H2O + H(+). It catalyses the reaction L-isoleucine + 2 reduced [NADPH--hemoprotein reductase] + 2 O2 = (1E,2S)-2-methylbutanal oxime + 2 oxidized [NADPH--hemoprotein reductase] + CO2 + 3 H2O + 2 H(+). It carries out the reaction L-isoleucine + reduced [NADPH--hemoprotein reductase] + O2 = N-hydroxy-L-isoleucine + oxidized [NADPH--hemoprotein reductase] + H2O + 2 H(+). The catalysed reaction is N-hydroxy-L-isoleucine + reduced [NADPH--hemoprotein reductase] + O2 = N,N-dihydroxy-L-isoleucine + oxidized [NADPH--hemoprotein reductase] + H2O + H(+). Its pathway is secondary metabolite biosynthesis. With respect to regulation, inhibited by tetcyclasis but not by 1-aminobenzotriazole (ABT). Its function is as follows. Involved in the biosynthesis of the cyanogenic glucosides linamarin and lotaustralin. Can use L-valine or L-isoleucine as substrate, but not L-leucine, L-phenylalanine, L-tyrosine, D-valine or D-isoleucine. Catalyzes multi-step reactions starting with two successive N-hydroxylations using L-valine and L-isoleucine as substrates leading to the formation of N,N-dihydroxy-L-valine and N,N-dihydroxy-L-isoleucine, respectively; following spontaneous reactions lead to the production of (E)-2-methylpropanal oxime and (1E,2S)-2-methylbutanal oxime, respectively. The sequence is that of Valine N-monooxygenase 1 from Manihot esculenta (Cassava).